The sequence spans 888 residues: Autophagy-related protein 9 (888 aa).

Residues Met1–Pro170 are disordered. Residues Met1–Asn255 are Cytoplasmic-facing. The segment covering Ser13–Arg24 has biased composition (polar residues). A compositionally biased stretch (acidic residues) spans Asp28–Glu38. Residues Arg123–Thr143 are compositionally biased toward polar residues. The helical transmembrane segment at Phe256–Ile276 threads the bilayer. The Lumenal segment spans residues Arg277–Arg422. Residues Phe423 to Ile443 traverse the membrane as a helical segment. The Cytoplasmic portion of the chain corresponds to Val444–Arg511. Residues Thr512 to Ser532 lie within the membrane without spanning it. Residues Glu533–Arg544 are Cytoplasmic-facing. Residues Pro545–Ser565 traverse the membrane as a helical segment. Residues Glu566–Lys611 lie on the Lumenal side of the membrane. The chain crosses the membrane as a helical span at residues Val612–Ser632. At Leu633–Asp642 the chain is on the cytoplasmic side. Residues Phe643–Phe663 lie within the membrane without spanning it. Over Asp664 to Val888 the chain is Cytoplasmic. Disordered stretches follow at residues Gly748–Gly770 and Glu834–Ala866.

Belongs to the ATG9 family. As to quaternary structure, homotrimer; forms a homotrimer with a central pore that forms a path between the two membrane leaflets. Phosphorylated by ATG1. ATG1 phosphorylation is required for ATG18 interaction and preautophagosome elongation.

The protein resides in the preautophagosomal structure membrane. It is found in the cytoplasmic vesicle membrane. The protein localises to the golgi apparatus membrane. Its subcellular location is the endoplasmic reticulum membrane. It carries out the reaction a 1,2-diacyl-sn-glycero-3-phosphocholine(in) = a 1,2-diacyl-sn-glycero-3-phosphocholine(out). It catalyses the reaction a 1,2-diacyl-sn-glycero-3-phospho-L-serine(in) = a 1,2-diacyl-sn-glycero-3-phospho-L-serine(out). The enzyme catalyses a 1,2-diacyl-sn-glycero-3-phosphoethanolamine(in) = a 1,2-diacyl-sn-glycero-3-phosphoethanolamine(out). The catalysed reaction is a 1,2-diacyl-sn-glycero-3-phospho-(1D-myo-inositol-3-phosphate)(in) = a 1,2-diacyl-sn-glycero-3-phospho-(1D-myo-inositol-3-phosphate)(out). Functionally, phospholipid scramblase involved in autophagy and cytoplasm to vacuole transport (Cvt) vesicle formation. Cycles between the preautophagosomal structure/phagophore assembly site (PAS) and the cytoplasmic vesicle pool and supplies membrane for the growing autophagosome. Lipid scramblase activity plays a key role in preautophagosomal structure/phagophore assembly by distributing the phospholipids that arrive through ATG2 from the cytoplasmic to the luminal leaflet of the bilayer, thereby driving autophagosomal membrane expansion. Required for mitophagy. Also involved in endoplasmic reticulum-specific autophagic process and is essential for the survival of cells subjected to severe ER stress. Different machineries are required for anterograde trafficking to the PAS during either the Cvt pathway or bulk autophagy and for retrograde trafficking. Autophagy is required for proper vegetative growth, asexual/sexual reproduction, and full virulence. Autophagy is particularly involved in the biosynthesis of deoxynivalenol (DON), an important virulence determinant. Required for aerial hyphae development and lipid droplet degradation in response to starvation. The sequence is that of Autophagy-related protein 9 from Gibberella zeae (strain ATCC MYA-4620 / CBS 123657 / FGSC 9075 / NRRL 31084 / PH-1) (Wheat head blight fungus).